Here is a 324-residue protein sequence, read N- to C-terminus: MAFKDLFKFNKGKTTFVFIGGKGGVGKTTISAATALWMARSGKKTLVISTDPAHSLSDSLEREIGHTPTKITENLYAVEIDPEVAMEEYQAKLQEQAAMNPGMGLDMLQDQMDMASMSPGIDEAAAFDQFLRYMTTDEYDIVIFDTAPTGHTLRLLSFPEIMDSWVGKMIKIRRQIGSMAKAFKNILPFMGDEEEEDRALQDMEATKKQINAAREVMSDPERTSFKMVVIPEEMSIYESERAMKALEKYSIHADGVIVNQVLPEESDCEFCNARRKLQQERLKQIREKFSDKVVAEVPLLKKEAKGIETLEKIAEQLYGEPEPE.

21–28 (GKGGVGKT) provides a ligand contact to ATP.

The protein belongs to the arsA ATPase family.

It carries out the reaction arsenite(in) + ATP + H2O = arsenite(out) + ADP + phosphate + H(+). In terms of biological role, anion-transporting ATPase. Catalyzes the extrusion of arsenite. This chain is Putative arsenical pump-driving ATPase, found in Methanothermobacter thermautotrophicus (strain ATCC 29096 / DSM 1053 / JCM 10044 / NBRC 100330 / Delta H) (Methanobacterium thermoautotrophicum).